Consider the following 80-residue polypeptide: WAP four-disulfide core domain protein 15B (80 aa).

A signal peptide spans Met1–Ala20. Residues Val29 to Trp76 enclose the WAP domain. 4 cysteine pairs are disulfide-bonded: Cys36-Cys64, Cys43-Cys68, Cys51-Cys63, and Cys57-Cys72.

In terms of tissue distribution, constitutively expressed in kidney and epididymis.

It is found in the secreted. Its function is as follows. Antibacterial protein which inhibits the growth of E.coli and S.aureus. This chain is WAP four-disulfide core domain protein 15B (Wfdc15b), found in Mus musculus (Mouse).